Reading from the N-terminus, the 360-residue chain is UDP-D-xylose:L-fucose alpha-1,3-D-xylosyltransferase MGP4 (360 aa).

A disordered region spans residues 1–25 (MAQQKFLHQRPIQNPFTNPFSSSPL). Over 1–41 (MAQQKFLHQRPIQNPFTNPFSSSPLSTSSISNRPISLLSRN) the chain is Cytoplasmic. Positions 14–25 (NPFTNPFSSSPL) are enriched in low complexity. The chain crosses the membrane as a helical; Signal-anchor for type II membrane protein span at residues 42–62 (GLLLLLALLVILGVFLPWAGS). Over 63–360 (PLFPSPNKLS…ASESPLGKLE (298 aa)) the chain is Lumenal. N-linked (GlcNAc...) asparagine glycans are attached at residues asparagine 93 and asparagine 168. A DXD motif motif is present at residues 191-193 (DVD). 2 N-linked (GlcNAc...) asparagine glycosylation sites follow: asparagine 285 and asparagine 310.

The protein belongs to the glycosyltransferase 77 family. Requires Mn(2+) as cofactor. It depends on Mg(2+) as a cofactor. Widely expressed.

Its subcellular location is the golgi apparatus membrane. Its function is as follows. Catalyzes the transfer of D-xylose from UDP-alpha-D-xylose onto L-fucose. Probably involved in the biosynthesis of rhamnogalacturonan II (RG-II) through xylosylation of the internal fucose moiety of the A-chain of RG-II, a structurally complex pectic polysaccharide of the primary cell wall. RG-II is essential for the cell wall integrity of rapidly growing tissues such as roots and pollen tube growth and elongation. The sequence is that of UDP-D-xylose:L-fucose alpha-1,3-D-xylosyltransferase MGP4 from Arabidopsis thaliana (Mouse-ear cress).